The sequence spans 464 residues: Fumarate hydratase class II (464 aa).

Residues 96–98, 127–130, 137–139, and Thr185 contribute to the substrate site; these read SGT, HPND, and SSN. His186 (proton donor/acceptor) is an active-site residue. Residue Ser316 is part of the active site. Substrate contacts are provided by residues Ser317 and 322 to 324; that span reads KVN.

The protein belongs to the class-II fumarase/aspartase family. Fumarase subfamily. As to quaternary structure, homotetramer.

The protein resides in the cytoplasm. The enzyme catalyses (S)-malate = fumarate + H2O. The protein operates within carbohydrate metabolism; tricarboxylic acid cycle; (S)-malate from fumarate: step 1/1. Functionally, involved in the TCA cycle. Catalyzes the stereospecific interconversion of fumarate to L-malate. The polypeptide is Fumarate hydratase class II (Pseudomonas putida (strain ATCC 47054 / DSM 6125 / CFBP 8728 / NCIMB 11950 / KT2440)).